The sequence spans 147 residues: Lysozyme C (147 aa).

Positions 1 to 18 (MRSLLVLVLCFLPLAALG) are cleaved as a signal peptide. The C-type lysozyme domain occupies 19–147 (KVYGRCELAA…VNAWIRGCRL (129 aa)). Cystine bridges form between cysteine 24–cysteine 145, cysteine 48–cysteine 133, cysteine 82–cysteine 98, and cysteine 94–cysteine 112. Catalysis depends on residues glutamate 53 and aspartate 70.

The protein belongs to the glycosyl hydrolase 22 family. Monomer.

Its subcellular location is the secreted. It catalyses the reaction Hydrolysis of (1-&gt;4)-beta-linkages between N-acetylmuramic acid and N-acetyl-D-glucosamine residues in a peptidoglycan and between N-acetyl-D-glucosamine residues in chitodextrins.. Its function is as follows. Lysozymes have primarily a bacteriolytic function; those in tissues and body fluids are associated with the monocyte-macrophage system and enhance the activity of immunoagents. The chain is Lysozyme C (LYZ) from Coturnix japonica (Japanese quail).